Here is a 429-residue protein sequence, read N- to C-terminus: Ribosomal RNA small subunit methyltransferase B (429 aa).

Residues 254–260, aspartate 277, aspartate 303, and aspartate 322 contribute to the S-adenosyl-L-methionine site; that span reads CAAPGGK. Cysteine 375 acts as the Nucleophile in catalysis. Residues 397–419 form a disordered region; the sequence is ALSETGTPDQPGQQNLPGGEEGD. Residues 400 to 412 show a composition bias toward polar residues; it reads ETGTPDQPGQQNL.

The protein belongs to the class I-like SAM-binding methyltransferase superfamily. RsmB/NOP family.

It is found in the cytoplasm. The catalysed reaction is cytidine(967) in 16S rRNA + S-adenosyl-L-methionine = 5-methylcytidine(967) in 16S rRNA + S-adenosyl-L-homocysteine + H(+). Specifically methylates the cytosine at position 967 (m5C967) of 16S rRNA. The sequence is that of Ribosomal RNA small subunit methyltransferase B from Salmonella paratyphi A (strain ATCC 9150 / SARB42).